The following is a 431-amino-acid chain: Tol-Pal system protein TolB (431 aa).

An N-terminal signal peptide occupies residues 1–26; the sequence is MRLMTKLGFRALVASCLIAAGAAANA. A disordered region spans residues 411–431; sequence PQILSVQGGSVREPSWGPFMQ.

This sequence belongs to the TolB family. As to quaternary structure, the Tol-Pal system is composed of five core proteins: the inner membrane proteins TolA, TolQ and TolR, the periplasmic protein TolB and the outer membrane protein Pal. They form a network linking the inner and outer membranes and the peptidoglycan layer.

It localises to the periplasm. Its function is as follows. Part of the Tol-Pal system, which plays a role in outer membrane invagination during cell division and is important for maintaining outer membrane integrity. The chain is Tol-Pal system protein TolB from Burkholderia ambifaria (strain ATCC BAA-244 / DSM 16087 / CCUG 44356 / LMG 19182 / AMMD) (Burkholderia cepacia (strain AMMD)).